We begin with the raw amino-acid sequence, 98 residues long: NADH-ubiquinone oxidoreductase chain 4L (98 aa).

3 consecutive transmembrane segments (helical) span residues 1-21, 29-49, and 61-81; these read MPFI…GLLI, SLLC…TMTL, and IILL…LILI.

Belongs to the complex I subunit 4L family. In terms of assembly, core subunit of respiratory chain NADH dehydrogenase (Complex I) which is composed of 45 different subunits.

Its subcellular location is the mitochondrion inner membrane. It carries out the reaction a ubiquinone + NADH + 5 H(+)(in) = a ubiquinol + NAD(+) + 4 H(+)(out). Core subunit of the mitochondrial membrane respiratory chain NADH dehydrogenase (Complex I) which catalyzes electron transfer from NADH through the respiratory chain, using ubiquinone as an electron acceptor. Part of the enzyme membrane arm which is embedded in the lipid bilayer and involved in proton translocation. This chain is NADH-ubiquinone oxidoreductase chain 4L (MT-ND4L), found in Cebus albifrons (White-fronted capuchin).